We begin with the raw amino-acid sequence, 814 residues long: Leucine--tRNA ligase (814 aa).

The short motif at 42-52 is the 'HIGH' region element; sequence PYPSGNLHIGH. A 'KMSKS' region motif is present at residues 582-586; that stretch reads KMSKS. Lys-585 is a binding site for ATP.

It belongs to the class-I aminoacyl-tRNA synthetase family.

The protein localises to the cytoplasm. The enzyme catalyses tRNA(Leu) + L-leucine + ATP = L-leucyl-tRNA(Leu) + AMP + diphosphate. The chain is Leucine--tRNA ligase from Herpetosiphon aurantiacus (strain ATCC 23779 / DSM 785 / 114-95).